The sequence spans 335 residues: 4-hydroxythreonine-4-phosphate dehydrogenase (335 aa).

A substrate-binding site is contributed by Thr132. A divalent metal cation is bound by residues His163, His208, and His263. Lys271, Asn280, and Arg289 together coordinate substrate.

Belongs to the PdxA family. As to quaternary structure, homodimer. Requires Zn(2+) as cofactor. Mg(2+) is required as a cofactor. Co(2+) serves as cofactor.

It is found in the cytoplasm. The catalysed reaction is 4-(phosphooxy)-L-threonine + NAD(+) = 3-amino-2-oxopropyl phosphate + CO2 + NADH. Its pathway is cofactor biosynthesis; pyridoxine 5'-phosphate biosynthesis; pyridoxine 5'-phosphate from D-erythrose 4-phosphate: step 4/5. Catalyzes the NAD(P)-dependent oxidation of 4-(phosphooxy)-L-threonine (HTP) into 2-amino-3-oxo-4-(phosphooxy)butyric acid which spontaneously decarboxylates to form 3-amino-2-oxopropyl phosphate (AHAP). The sequence is that of 4-hydroxythreonine-4-phosphate dehydrogenase from Zymomonas mobilis subsp. mobilis (strain ATCC 31821 / ZM4 / CP4).